We begin with the raw amino-acid sequence, 190 residues long: Imidazoleglycerol-phosphate dehydratase (190 aa).

The protein belongs to the imidazoleglycerol-phosphate dehydratase family.

Its subcellular location is the cytoplasm. The catalysed reaction is D-erythro-1-(imidazol-4-yl)glycerol 3-phosphate = 3-(imidazol-4-yl)-2-oxopropyl phosphate + H2O. Its pathway is amino-acid biosynthesis; L-histidine biosynthesis; L-histidine from 5-phospho-alpha-D-ribose 1-diphosphate: step 6/9. This chain is Imidazoleglycerol-phosphate dehydratase, found in Nitratiruptor sp. (strain SB155-2).